The primary structure comprises 196 residues: Guanylate kinase (196 aa).

Positions 8 to 191 (GRLIVLTGPT…AAADLWSVIA (184 aa)) constitute a Guanylate kinase-like domain. 15–22 (GPTAVGKG) contributes to the ATP binding site.

This sequence belongs to the guanylate kinase family.

The protein localises to the cytoplasm. It catalyses the reaction GMP + ATP = GDP + ADP. Functionally, essential for recycling GMP and indirectly, cGMP. This Bifidobacterium longum (strain NCC 2705) protein is Guanylate kinase.